Consider the following 447-residue polypeptide: MSNAKEKVSMVSLGCPKNLVDAEVMLGRLAKDRYEITTDEREADIIIVNTCSFIKEAKQESIDTILDLADRKQDGRCRLLIVTGCLPQRYQEELARELPEVDIFVGTGDYPRIAEIIEEKSSRPEQLRYIGDPNFVFDESLTRLNSSPAYTAYLKIAEGCSNCCSYCVIPSLRGAFRSRPLESVLAEARSLVAGGAREINLIAQDITTYGRDLPGAPSLETLIRELAAIDGLAWIRLLYAYPDGITDGLIQTIKNEPKVCKYLDLPIQHISDPILKRMNRRSTEPQIRELVARLREEIPDIALRTSLIVGFPGETEEDFRTLLHFVEEAQFDRLGVFCYSREEGTPAAEMPDQVSERVKRERYKKLMKAQARVSFKRNRRLIDTEEQVIVEGYSEETELLLKGRSSRQAPDIDGQVYITAGNANVGDIVRLRITDSSDYDLIGEIIS.

The region spanning 6 to 122 (EKVSMVSLGC…IAEIIEEKSS (117 aa)) is the MTTase N-terminal domain. [4Fe-4S] cluster contacts are provided by Cys-15, Cys-51, Cys-85, Cys-160, Cys-164, and Cys-167. The Radical SAM core domain occupies 146-376 (SSPAYTAYLK…MKAQARVSFK (231 aa)). One can recognise a TRAM domain in the interval 379-447 (RRLIDTEEQV…DYDLIGEIIS (69 aa)).

Belongs to the methylthiotransferase family. RimO subfamily. The cofactor is [4Fe-4S] cluster.

It localises to the cytoplasm. It carries out the reaction L-aspartate(89)-[ribosomal protein uS12]-hydrogen + (sulfur carrier)-SH + AH2 + 2 S-adenosyl-L-methionine = 3-methylsulfanyl-L-aspartate(89)-[ribosomal protein uS12]-hydrogen + (sulfur carrier)-H + 5'-deoxyadenosine + L-methionine + A + S-adenosyl-L-homocysteine + 2 H(+). In terms of biological role, catalyzes the methylthiolation of an aspartic acid residue of ribosomal protein uS12. The protein is Ribosomal protein uS12 methylthiotransferase RimO of Geobacter sulfurreducens (strain ATCC 51573 / DSM 12127 / PCA).